The following is a 260-amino-acid chain: Taurine import ATP-binding protein TauB (260 aa).

One can recognise an ABC transporter domain in the interval 6 to 235 (AQQVSVVYAS…RYAHGEPVRS (230 aa)). Residue 40-47 (GASGCGKS) coordinates ATP.

Belongs to the ABC transporter superfamily. Taurine importer (TC 3.A.1.17.1) family. In terms of assembly, the complex is composed of two ATP-binding proteins (TauB), two transmembrane proteins (TauC) and a solute-binding protein (TauA).

It is found in the cell inner membrane. The catalysed reaction is taurine(out) + ATP + H2O = taurine(in) + ADP + phosphate + H(+). In terms of biological role, part of the ABC transporter complex TauABC involved in taurine import. Responsible for energy coupling to the transport system. The polypeptide is Taurine import ATP-binding protein TauB (Burkholderia pseudomallei (strain K96243)).